A 364-amino-acid polypeptide reads, in one-letter code: Nucleosome assembly protein 1;2 (364 aa).

Positions 32–86 form a coiled coil; sequence VESIKNTLQGLAARHTDVLESLEPKVRKRVEVLREIQSQHDDLEAKFFEERAALE. A Nuclear export signal motif is present at residues 53–68; sequence LEPKVRKRVEVLREIQ. Residues 227-232 carry the Nuclear localization signal motif; the sequence is KKKPKK. Disordered regions lie at residues 250-269 and 301-364; these read FNFF…DEDT and GEAA…CKQQ. 2 stretches are compositionally biased toward acidic residues: residues 259–269 and 304–340; these read PDDDEEIDEDT and AQDE…DDED. A Cysteine methyl ester modification is found at Cys361. Cys361 is lipidated: S-farnesyl cysteine. Positions 362–364 are cleaved as a propeptide — removed in mature form; sequence KQQ.

This sequence belongs to the nucleosome assembly protein (NAP) family. In terms of assembly, binds preferentially histone H1 in vitro. In terms of tissue distribution, highly expressed in tissues exhibiting active cell-division activities, such as root and shoot meristems and young flowers.

The protein localises to the nucleus. Its subcellular location is the cytoplasm. Its function is as follows. May modulate chromatin structure by regulation of nucleosome assembly/disassembly. This chain is Nucleosome assembly protein 1;2 (NAP1;2), found in Oryza sativa subsp. indica (Rice).